Consider the following 343-residue polypeptide: MAKRQLNRRQNWRIEKIQGERAARAAKRESATLETLEGGDLGPEQTGLVIAHFGVQVEVEAQEGEVTGQVFRCHLRANLPALVTGDRVVWRAGNQGIGVIVAQLPRTTELRRPDSRGQLKPVAANVDLIVIVFAPMPEPHANLIDRYLVAAEHAGIRPLLLLNKADLIDEQNAPALNALLAVYRTLGYPVLEVSAHHGDGMQSLQSQLDGHISVFVGQSGVGKSSLVNSLLPETDTRVGPLSEVSGQGTHTTTTARLFHFPRGGDLIDSPGIREFGLGHVSRADVEAGFIEFNDLIGTCRFRDCKHDREPGCALLKGLEDGRVQQQRMNSYRSIIASLPQDSY.

Positions 116 to 275 (RGQLKPVAAN…LIDSPGIREF (160 aa)) constitute a CP-type G domain. GTP is bound by residues 163–166 (NKAD) and 217–225 (GQSGVGKSS). Zn(2+) contacts are provided by Cys-299, Cys-304, His-306, and Cys-312.

It belongs to the TRAFAC class YlqF/YawG GTPase family. RsgA subfamily. Monomer. Associates with 30S ribosomal subunit, binds 16S rRNA. Zn(2+) is required as a cofactor.

The protein resides in the cytoplasm. Its function is as follows. One of several proteins that assist in the late maturation steps of the functional core of the 30S ribosomal subunit. Helps release RbfA from mature subunits. May play a role in the assembly of ribosomal proteins into the subunit. Circularly permuted GTPase that catalyzes slow GTP hydrolysis, GTPase activity is stimulated by the 30S ribosomal subunit. The chain is Small ribosomal subunit biogenesis GTPase RsgA from Pseudomonas syringae pv. syringae (strain B728a).